A 263-amino-acid chain; its full sequence is Non-functional protein STAY-GREEN, chloroplastic (263 aa).

The N-terminal 54 residues, 1–54 (MDTLTSAPLLTSKFKPSFSPQQKPCFPHRRRFENGKKKQSIVPVARLFGPAIFE), are a transit peptide targeting the chloroplast.

It belongs to the staygreen family.

It is found in the plastid. The protein localises to the chloroplast. Functionally, non-functional protein probably interfering with the disassembling mechanism of the intact light-harvesting complex of photosystem II (LHCII) in the thylakoid membranes. Responsible for a stay-green phenotype. The chain is Non-functional protein STAY-GREEN, chloroplastic (SGR) from Pisum sativum (Garden pea).